We begin with the raw amino-acid sequence, 724 residues long: Solute carrier organic anion transporter family member 4C1 (724 aa).

At 1 to 105 (MKSAKGIENL…QCLQRCNTPG (105 aa)) the chain is on the cytoplasmic side. 5 positions are modified to phosphoserine: S15, S16, S24, S26, and S28. Positions 24–71 (SASPSQVEVSALSSDPQRENSQPQELQKPQEPQKSPEPSLPSAPPNVS) are disordered. A compositionally biased stretch (polar residues) spans 25–38 (ASPSQVEVSALSSD). Positions 44-60 (SQPQELQKPQEPQKSPE) are enriched in low complexity. Residues 106–126 (GFLLHYCLLAVTQGIVVNGLV) traverse the membrane as a helical segment. The Extracellular segment spans residues 127-145 (NISISTIEKRYEMKSSLTG). Residues 146 to 166 (LISSSYDISFCLLSLFVSFFG) form a helical membrane-spanning segment. The Cytoplasmic segment spans residues 167–172 (ERGHKP). The chain crosses the membrane as a helical span at residues 173-197 (RWLAFAAFMIGLGALVFSLPQFFSG). Topologically, residues 198–224 (EYKLGSLFEDTCVTTRNSTSCTSSTSS) are extracellular. Residues 225-254 (LSNYLYVFILGQLLLGAGGTPLYTLGTAFL) form a helical membrane-spanning segment. Topologically, residues 255–274 (DDSVPTHKSSLYIGTGYAMS) are cytoplasmic. The chain crosses the membrane as a helical span at residues 275-295 (ILGPAIGYVLGGQLLTIYVDV). At 296 to 311 (AMGESTDITEDDPRWL) the chain is on the extracellular side. The helical transmembrane segment at 312–336 (GAWWIGFLLSWIFAWSLIIPFSCFP) threads the bilayer. Topologically, residues 337 to 377 (KHLPGTAEIQAGKTSQAHQSNSNADAKFGKSIKDFPAALKN) are cytoplasmic. The helical transmembrane segment at 378-399 (LMKNAVFMCLVLSTSSEALITT) threads the bilayer. Residues 400–419 (GFATFLPKFIENQFGLTSSF) are Extracellular-facing. Residues 420–443 (AATLGGAVLIPGAALGQILGGFLV) traverse the membrane as a helical segment. At 444–447 (SKFK) the chain is on the cytoplasmic side. A helical transmembrane segment spans residues 448 to 471 (MTCKNTMKFALFTSGVALTLSFVF). Residues 472–580 (IYAKCGNEPF…ETHCAKLPIF (109 aa)) are Extracellular-facing. In terms of domain architecture, Kazal-like spans 495 to 549 (GNLIAPCNANCNCLRSYYYPVCGDGVQYFSPCFAGCSNSVAHRKPKVYYNCSCIE). Intrachain disulfides connect C501–C530, C507–C526, and C516–C547. A helical membrane pass occupies residues 581-603 (LCIFFIVIIFTFMAGTPITVSIL). At 604–612 (RCVNHRQRS) the chain is on the cytoplasmic side. Residues 613–638 (LALGIQFMVLRLLGTIPGPIIFGFTI) form a helical membrane-spanning segment. The Extracellular portion of the chain corresponds to 639 to 672 (DSTCILWDINDCGIKGACRIYDNIKMAHMLVAIS). Residues 673–690 (VTCKVITMFFNGFAIFLY) form a helical membrane-spanning segment. Residues 691–724 (KPPPSATDLSFHKENAVVTNVLAEQDLNKIVKEG) lie on the Cytoplasmic side of the membrane.

This sequence belongs to the organo anion transporter (TC 2.A.60) family.

The protein localises to the basolateral cell membrane. It carries out the reaction estrone 3-sulfate(out) = estrone 3-sulfate(in). The enzyme catalyses L-thyroxine(out) = L-thyroxine(in). The catalysed reaction is 3,3',5-triiodo-L-thyronine(out) = 3,3',5-triiodo-L-thyronine(in). It catalyses the reaction chenodeoxycholate(out) = chenodeoxycholate(in). It carries out the reaction glycocholate(out) = glycocholate(in). The enzyme catalyses L-homoarginine(in) = L-homoarginine(out). The catalysed reaction is L-arginine(in) = L-arginine(out). It catalyses the reaction N(omega),N(omega)-dimethyl-L-arginine(out) = N(omega),N(omega)-dimethyl-L-arginine(in). Its function is as follows. Mediates the transport of organic anions such as steroids (estrone 3-sulfate, chenodeoxycholate, glycocholate) and thyroid hormones (3,3',5-triiodo-L-thyronine (T3), L-thyroxine (T4)), in the kidney. Capable of transporting cAMP and pharmacological substances such as digoxin, ouabain and methotrexate. Transport is independent of sodium, chloride ion, and ATP. Transport activity is stimulated by an acidic extracellular environment due to increased substrate affinity to the transporter. The driving force for this transport activity is currently not known. The role of hydrogencarbonate (HCO3(-), bicarbonate) as the probable counteranion that exchanges for organic anions is still not well defined. Functions as an uptake transporter at the apical membrane, suggesting a role in renal reabsorption. Involved in the renal secretion of the uremic toxin ADMA (N(omega),N(omega)-dimethyl-L-arginine or asymmetrical dimethylarginine), which is associated to cardiovascular events and mortality, and the structurally related amino acids L-arginine and L-homoarginine (a cardioprotective biomarker). Can act bidirectionally, suggesting a dual protective role of this transport protein; exporting L-homoarginine after being synthesized in proximal tubule cells, and mediating uptake of ADMA from the blood into proximal tubule cells where it is degraded by the enzyme dimethylarginine dimethylaminohydrolase 1 (DDAH1). May be involved in sperm maturation by enabling directed movement of organic anions and compounds within or between cells. This ion-transporting process is important to maintain the strict epididymal homeostasis necessary for sperm maturation. May have a role in secretory functions since seminal vesicle epithelial cells are assumed to secrete proteins involved in decapacitation by modifying surface proteins to facilitate the acquisition of the ability to fertilize the egg. The sequence is that of Solute carrier organic anion transporter family member 4C1 from Pongo abelii (Sumatran orangutan).